The primary structure comprises 609 residues: Frizzled and smoothened-like protein E (609 aa).

An N-terminal signal peptide occupies residues 1 to 20 (MEMIRIFLIYLILKIIIING). Topologically, residues 21–259 (ENNEYSKGYG…QWKRVYDMAK (239 aa)) are extracellular. Residues 35–192 (FPGSKCLNYV…GLYKVPCIDP (158 aa)) enclose the FZ domain. 4 disulfide bridges follow: C40–C118, C53–C111, C100–C149, and C138–C189. N-linked (GlcNAc...) asparagine glycans are attached at residues N75, N130, N172, N198, N217, and N245. A helical transmembrane segment spans residues 260-280 (TLSSISFICACYNILTFGILN). At 281–288 (RKRKSKYN) the chain is on the cytoplasmic side. A helical membrane pass occupies residues 289 to 309 (ICITLMSTSIALVYLTDIIKF). Residues 310-337 (GYGIEEFLCPEPGRSAVQNDAACGITGA) are Extracellular-facing. A helical membrane pass occupies residues 338–358 (MFHFGITYCCCWAMTMSIVLF). The Cytoplasmic portion of the chain corresponds to 359–365 (CSVKRIK). Residues 366 to 386 (LFYFRHFMIGNTIFTIITTVI) traverse the membrane as a helical segment. The Extracellular segment spans residues 387-408 (LLSAKKMVAGTGYIECWVRERW). Residues 409–429 (FVITLFWLPCGIGLSIGIFCI) form a helical membrane-spanning segment. At 430–457 (GGVIHEIYNISKKVNIRESEFILRQIKP) the chain is on the cytoplasmic side. Residues 458–478 (FSLVFSVAGSFLYLFIFFFDV) traverse the membrane as a helical segment. Over 479-511 (ERKIDSYKAAVADYVLCLLSGGSEETCFTTGPN) the chain is Extracellular. Residues 512-532 (YASFFIFYFFIRVFGVLFFSI) form a helical membrane-spanning segment. At 533 to 609 (YGTSRVARDI…DSKSIELEKK (77 aa)) the chain is on the cytoplasmic side. A compositionally biased stretch (polar residues) spans 559-570 (ESGISRNNSRTD). Residues 559-609 (ESGISRNNSRTDISFGKNNNSKNSNNSKNSNNSKNSNNSDNDSKSIELEKK) are disordered. Low complexity predominate over residues 575–598 (KNNNSKNSNNSKNSNNSKNSNNSD). A compositionally biased stretch (basic and acidic residues) spans 599–609 (NDSKSIELEKK).

Belongs to the G-protein coupled receptor Fz/Smo family.

The protein localises to the membrane. The sequence is that of Frizzled and smoothened-like protein E (fslE) from Dictyostelium discoideum (Social amoeba).